The chain runs to 333 residues: Ornithine carbamoyltransferase (333 aa).

Carbamoyl phosphate is bound by residues 56-59 (STRT), glutamine 83, arginine 107, and 134-137 (HPTQ). Residues asparagine 167, aspartate 231, and 235-236 (SM) each bind L-ornithine. Carbamoyl phosphate is bound by residues 273–274 (CL) and arginine 318.

This sequence belongs to the aspartate/ornithine carbamoyltransferase superfamily. OTCase family.

The protein resides in the cytoplasm. It carries out the reaction carbamoyl phosphate + L-ornithine = L-citrulline + phosphate + H(+). It functions in the pathway amino-acid biosynthesis; L-arginine biosynthesis; L-arginine from L-ornithine and carbamoyl phosphate: step 1/3. Its function is as follows. Reversibly catalyzes the transfer of the carbamoyl group from carbamoyl phosphate (CP) to the N(epsilon) atom of ornithine (ORN) to produce L-citrulline. This is Ornithine carbamoyltransferase from Staphylococcus aureus (strain MSSA476).